The primary structure comprises 667 residues: mRNA cap guanine-N(7) methyltransferase (667 aa).

The segment covering 1-19 (MYDPARDSWEERDGDEARS) has biased composition (basic and acidic residues). The interval 1-272 (MYDPARDSWE…RRRQEERERA (272 aa)) is disordered. A compositionally biased stretch (polar residues) spans 33 to 52 (FSSSEQIYGASGENNNTTDL). Low complexity predominate over residues 72-87 (SPPAQSTTQTPPSIST). Residues 88-128 (HVQSPVNPAAQEASNTQSLTSAAQNQSNKSTTTMDNTSGSA) show a composition bias toward polar residues. Residues 132–142 (PRADPSDKSNR) show a composition bias toward basic and acidic residues. Polar residues predominate over residues 147 to 156 (ASPTDQNGSQ). The span at 256–272 (LVDRETLRRRQEERERA) shows a compositional bias: basic and acidic residues. The region spanning 309–667 (SKIKGLRSFN…FYHAFCFYKV (359 aa)) is the mRNA cap 0 methyltransferase domain. MRNA is bound at residue 318-319 (NN). Residues lysine 322, glycine 365, aspartate 389, aspartate 427, 470-472 (MFT), and tyrosine 475 each bind S-adenosyl-L-methionine. Over residues 521 to 535 (KKERQSQAKKEKTDE) the composition is skewed to basic and acidic residues. Positions 521-547 (KKERQSQAKKEKTDEAPEDGEVEEDDG) are disordered. The segment covering 536 to 547 (APEDGEVEEDDG) has biased composition (acidic residues).

It belongs to the class I-like SAM-binding methyltransferase superfamily. mRNA cap 0 methyltransferase family.

The protein localises to the nucleus. The catalysed reaction is a 5'-end (5'-triphosphoguanosine)-ribonucleoside in mRNA + S-adenosyl-L-methionine = a 5'-end (N(7)-methyl 5'-triphosphoguanosine)-ribonucleoside in mRNA + S-adenosyl-L-homocysteine. Its function is as follows. Responsible for methylating the 5'-cap structure of mRNAs. The polypeptide is mRNA cap guanine-N(7) methyltransferase (abd1) (Neosartorya fischeri (strain ATCC 1020 / DSM 3700 / CBS 544.65 / FGSC A1164 / JCM 1740 / NRRL 181 / WB 181) (Aspergillus fischerianus)).